The chain runs to 314 residues: L-lactate dehydrogenase 2 (314 aa).

Residues V16, D37, K42, Y68, and 82–83 contribute to the NAD(+) site; that span reads GL. Substrate contacts are provided by residues Q85, R91, and 123–126; that span reads NPVD. Residues 121 to 123 and S146 contribute to the NAD(+) site; that span reads ATN. A substrate-binding site is contributed by 151–154; that stretch reads DSAR. The beta-D-fructose 1,6-bisphosphate site is built by R156 and H171. The active-site Proton acceptor is the H178. The residue at position 223 (Y223) is a Phosphotyrosine. T232 contributes to the substrate binding site.

It belongs to the LDH/MDH superfamily. LDH family. As to quaternary structure, homotetramer.

It is found in the cytoplasm. It catalyses the reaction (S)-lactate + NAD(+) = pyruvate + NADH + H(+). Its pathway is fermentation; pyruvate fermentation to lactate; (S)-lactate from pyruvate: step 1/1. Its activity is regulated as follows. Allosterically activated by fructose 1,6-bisphosphate (FBP). Functionally, catalyzes the conversion of lactate to pyruvate. The polypeptide is L-lactate dehydrogenase 2 (Bacillus anthracis).